Here is a 166-residue protein sequence, read N- to C-terminus: uncharacterized protein (166 aa).

The tract at residues Pro25–His116 is disordered. The residue at position 105 (Ser105) is a Phosphoserine.

This is an uncharacterized protein from Rattus norvegicus (Rat).